The following is a 341-amino-acid chain: Glyceraldehyde-3-phosphate dehydrogenase 4 (341 aa).

Residues 13–14, D35, and K85 each bind NAD(+); that span reads RI. D-glyceraldehyde 3-phosphate-binding positions include 157 to 159, T188, 217 to 218, and R240; these read SCT and TG. C158 serves as the catalytic Nucleophile. N322 is a binding site for NAD(+).

Belongs to the glyceraldehyde-3-phosphate dehydrogenase family. In terms of assembly, homotetramer.

It is found in the cytoplasm. It catalyses the reaction D-glyceraldehyde 3-phosphate + phosphate + NAD(+) = (2R)-3-phospho-glyceroyl phosphate + NADH + H(+). It functions in the pathway carbohydrate degradation; glycolysis; pyruvate from D-glyceraldehyde 3-phosphate: step 1/5. In Caenorhabditis elegans, this protein is Glyceraldehyde-3-phosphate dehydrogenase 4 (gpd-4).